The chain runs to 184 residues: Photosystem I assembly protein Ycf4 (184 aa).

The next 2 membrane-spanning stretches (helical) occupy residues 22–42 (FCWAFILFLGSLGFLLVGISS) and 57–77 (IIFFPQGIVMSFYGIAGLFIS).

This sequence belongs to the Ycf4 family.

Its subcellular location is the plastid. The protein localises to the chloroplast thylakoid membrane. Functionally, seems to be required for the assembly of the photosystem I complex. The chain is Photosystem I assembly protein Ycf4 from Ipomoea purpurea (Common morning glory).